The primary structure comprises 368 residues: Peptide chain release factor 2 (368 aa).

The disordered stretch occupies residues Glu-36–Ser-56. Gln-250 is modified (N5-methylglutamine).

The protein belongs to the prokaryotic/mitochondrial release factor family. In terms of processing, methylated by PrmC. Methylation increases the termination efficiency of RF2.

Its subcellular location is the cytoplasm. Functionally, peptide chain release factor 2 directs the termination of translation in response to the peptide chain termination codons UGA and UAA. The polypeptide is Peptide chain release factor 2 (Corynebacterium aurimucosum (strain ATCC 700975 / DSM 44827 / CIP 107346 / CN-1) (Corynebacterium nigricans)).